Reading from the N-terminus, the 425-residue chain is Bifunctional phosphoribosylaminoimidazole carboxylase/phosphoribosylaminoimidazole succinocarboxamide synthetase (425 aa).

N-acetylalanine is present on Ala2. Residues 2 to 260 (ATAEVLNIGK…WVAERVELLL (259 aa)) are SAICAR synthetase domain. Residue Tyr22 is modified to Phosphotyrosine. Phosphoserine is present on Ser27. At Lys36 the chain carries N6-acetyllysine. The residue at position 107 (Ser107) is a Phosphoserine. Thr238 carries the post-translational modification Phosphothreonine. Lys247 carries the N6-acetyllysine modification. Residues 261 to 266 (KSESQC) are linker. The segment at 267-425 (RVVVLMGSTS…ADKKIRECNL (159 aa)) is AIR carboxylase domain. The residue at position 274 (Ser274) is a Phosphoserine. Ser332 contacts CO2.

The protein in the N-terminal section; belongs to the SAICAR synthetase family. This sequence in the C-terminal section; belongs to the AIR carboxylase family. Class II subfamily. As to quaternary structure, homooctamer.

It carries out the reaction 5-amino-1-(5-phospho-D-ribosyl)imidazole-4-carboxylate + L-aspartate + ATP = (2S)-2-[5-amino-1-(5-phospho-beta-D-ribosyl)imidazole-4-carboxamido]succinate + ADP + phosphate + 2 H(+). It catalyses the reaction 5-amino-1-(5-phospho-D-ribosyl)imidazole-4-carboxylate + H(+) = 5-amino-1-(5-phospho-beta-D-ribosyl)imidazole + CO2. It functions in the pathway purine metabolism; IMP biosynthesis via de novo pathway; 5-amino-1-(5-phospho-D-ribosyl)imidazole-4-carboxamide from 5-amino-1-(5-phospho-D-ribosyl)imidazole-4-carboxylate: step 1/2. Its pathway is purine metabolism; IMP biosynthesis via de novo pathway; 5-amino-1-(5-phospho-D-ribosyl)imidazole-4-carboxylate from 5-amino-1-(5-phospho-D-ribosyl)imidazole (carboxylase route): step 1/1. In terms of biological role, bifunctional phosphoribosylaminoimidazole carboxylase and phosphoribosylaminoimidazole succinocarboxamide synthetase catalyzing two reactions of the de novo purine biosynthetic pathway. In Homo sapiens (Human), this protein is Bifunctional phosphoribosylaminoimidazole carboxylase/phosphoribosylaminoimidazole succinocarboxamide synthetase.